The sequence spans 83 residues: Small ribosomal subunit protein bS20 (83 aa).

A compositionally biased stretch (basic residues) spans Met-1–Ala-11. Residues Met-1 to Asp-44 are disordered.

The protein belongs to the bacterial ribosomal protein bS20 family.

In terms of biological role, binds directly to 16S ribosomal RNA. The polypeptide is Small ribosomal subunit protein bS20 (Desulforapulum autotrophicum (strain ATCC 43914 / DSM 3382 / VKM B-1955 / HRM2) (Desulfobacterium autotrophicum)).